We begin with the raw amino-acid sequence, 619 residues long: Lysophospholipid acyltransferase (619 aa).

At 1–19 (MYNPVDAVLTKIITNYGID) the chain is on the lumenal side. A helical transmembrane segment spans residues 20-39 (SFTLRYAICLLGSFPLNAIL). Residues 40-51 (KRIPEKRIGLKC) are Cytoplasmic-facing. The helical transmembrane segment at 52-72 (CFIISMSMFYLFGVLNLVSGF) threads the bilayer. The Lumenal portion of the chain corresponds to 73–92 (RTLFISTMFTYLISRFYRSK). Residues 93–113 (FMPHLNFMFVMGHLAINHIHA) traverse the membrane as a helical segment. The Cytoplasmic portion of the chain corresponds to 114 to 231 (QFLNEQTQTT…GERRQIPKNG (118 aa)). Residue Asp146 is the Nucleophile of the active site. A helical membrane pass occupies residues 232–252 (KLALWKVVQGLAWMILSTLGM). The Lumenal segment spans residues 253–274 (KHFPVKYVLDKDGFPTRSFIFR). A helical membrane pass occupies residues 275–295 (IHYLFLLGFIHRFKYYAAWTI). Topologically, residues 296–429 (SEGSCILCGL…TPLPSKKIYD (134 aa)) are cytoplasmic. The Nucleophile role is filled by Glu297. His382 is a catalytic residue. A helical membrane pass occupies residues 430-450 (LVGIYAIKLAFGYMVQPFIIL). At 451 to 456 (DLKPSL) the chain is on the lumenal side. Residues 457-477 (MVWGSVYFYVHIIVAFSFFLF) form a helical membrane-spanning segment. The Cytoplasmic segment spans residues 478–619 (RGPYAKQVTE…SPKPISKKEE (142 aa)). Position 513 is a phosphoserine (Ser513). A coiled-coil region spans residues 545 to 593 (ELEKWDNAKEDWEDFCKDYKEWRNKNGLEIEEENLSKAFERFKQEFSNA). A disordered region spans residues 592–619 (NAASGSGERVRKMSFSGYSPKPISKKEE). Residues Ser605, Ser610, and Ser615 each carry the phosphoserine modification.

It belongs to the membrane-bound acyltransferase family.

It localises to the endoplasmic reticulum membrane. It carries out the reaction a 1-acyl-sn-glycero-3-phosphate + an acyl-CoA = a 1,2-diacyl-sn-glycero-3-phosphate + CoA. The enzyme catalyses a 1-acyl-sn-glycero-3-phosphocholine + an acyl-CoA = a 1,2-diacyl-sn-glycero-3-phosphocholine + CoA. The catalysed reaction is 1-acyl-sn-glycero-3-phospho-(1'-sn-glycerol) + an acyl-CoA = a 1,2-diacyl-sn-glycero-3-phospho-(1'-sn-glycerol) + CoA. It catalyses the reaction a 1-acyl-sn-glycero-3-phospho-(1D-myo-inositol) + an acyl-CoA = a 1,2-diacyl-sn-glycero-3-phospho-(1D-myo-inositol) + CoA. It carries out the reaction a 1-acyl-sn-glycero-3-phospho-L-serine + an acyl-CoA = a 1,2-diacyl-sn-glycero-3-phospho-L-serine + CoA. The enzyme catalyses a 1-acyl-sn-glycero-3-phosphoethanolamine + an acyl-CoA = a 1,2-diacyl-sn-glycero-3-phosphoethanolamine + CoA. The catalysed reaction is 1-(9Z-octadecenoyl)-sn-glycero-3-phosphoethanolamine + (9Z)-octadecenoyl-CoA = 1,2-di-(9Z-octadecenoyl)-sn-glycero-3-phosphoethanolamine + CoA. It catalyses the reaction 1-(9Z-octadecenoyl)-sn-glycero-3-phosphoethanolamine + (9Z)-hexadecenoyl-CoA = 1-(9Z)-octadecenoyl-2-(9Z)-hexadecenoyl-sn-glycero-3-phosphoethanolamine + CoA. It carries out the reaction 1-(9Z-octadecenoyl)-sn-glycero-3-phosphoethanolamine + hexadecanoyl-CoA = 1-(9Z-octadecenoyl)-2-hexadecanoyl-sn-glycero-3-phosphoethanolamine + CoA. The enzyme catalyses 1-(9Z-octadecenoyl)-sn-glycero-3-phosphoethanolamine + tetradecanoyl-CoA = 1-(9Z)-octadecenoyl-2-tetradecanoyl-sn-glycero-3-phosphoethanolamine + CoA. The catalysed reaction is 1-(9Z-octadecenoyl)-sn-glycero-3-phosphate + (9Z)-octadecenoyl-CoA = 1,2-di-(9Z-octadecenoyl)-sn-glycero-3-phosphate + CoA. It catalyses the reaction (9Z)-hexadecenoyl-CoA + 1-hexadecanoyl-sn-glycero-3-phosphocholine = 1-hexadecanoyl-2-(9Z-hexadecenoyl)-sn-glycero-3-phosphocholine + CoA. It carries out the reaction 1-hexadecanoyl-sn-glycero-3-phosphocholine + (9Z)-octadecenoyl-CoA = 1-hexadecanoyl-2-(9Z-octadecenoyl)-sn-glycero-3-phosphocholine + CoA. The enzyme catalyses 1-tetradecanoyl-sn-glycero-3-phosphoethanolamine + (9Z)-octadecenoyl-CoA = 1-tetradecanoyl-2-(9Z-octadecenoyl)-sn-glycero-3-phosphoethanolamine + CoA. The catalysed reaction is 1-(9Z-octadecenoyl)-sn-glycero-3-phospho-L-serine + (9Z)-octadecenoyl-CoA = 1,2-di-(9Z)-octadecenoyl-sn-glycero-3-phospho-L-serine + CoA. It catalyses the reaction a 1-acyl-sn-glycero-3-phospho-(1D-myo-inositol) + (9Z)-octadecenoyl-CoA = a 1-acyl-2-(9Z-octadecenoyl)-sn-glycero-3-phospho-(1D-myo-inositol) + CoA. Its pathway is lipid metabolism; phospholipid metabolism. Broad specificity membrane-bound O-acyltransferase that mediates the incorporation of unsaturated acyl chains into the sn-2 position of various lysophospholipids. Preferentially acylates lysophosphocholine (LPC), but also lysophosphoethanolamine (LPE), lysophosphatidylglycerol (LPG), lysophosphatidic acid (LPA), lysophosphoethanolamine (LPE), lysophosphoinositol (LPI), and lysophosphoserine (LPS). Prefers an acyl residue to an alkyl residue at the sn-1 position of lysophospholipid acceptors. Accepts acyl chains in acyl-CoA from C-2 to C-20, and shows strong preference for unsaturated acyl-CoAs with 16-20 carbons. Together with SLC1, plays a central role in phosphatidic acid (PA) biosynthesis. PA is the intermediate, from which all glycerophospholipids are synthesized. Can also introduce an acyl chain at the sn-1 position of the lysophosphatidylcholine analog 1-hydroxy-2-hexadecyl-sn-glycero-3-phosphocholine (HHPC). This Saccharomyces cerevisiae (strain ATCC 204508 / S288c) (Baker's yeast) protein is Lysophospholipid acyltransferase.